Consider the following 151-residue polypeptide: UPF0178 protein Caul_3070 (151 aa).

It belongs to the UPF0178 family.

In Caulobacter sp. (strain K31), this protein is UPF0178 protein Caul_3070.